The chain runs to 2290 residues: Protein Ycf2 (2290 aa).

1644 to 1651 (GSIGTGRS) contributes to the ATP binding site.

This sequence belongs to the Ycf2 family.

It is found in the plastid. The protein localises to the chloroplast stroma. Functionally, probable ATPase of unknown function. Its presence in a non-photosynthetic plant (Epifagus virginiana) and experiments in tobacco indicate that it has an essential function which is probably not related to photosynthesis. This is Protein Ycf2 from Barbarea verna (Land cress).